The chain runs to 476 residues: Glucose-1-phosphate adenylyltransferase (476 aa).

Alpha-D-glucose 1-phosphate is bound by residues Y114, G179, 194 to 195 (EK), and S212.

It belongs to the bacterial/plant glucose-1-phosphate adenylyltransferase family. Homotetramer.

The enzyme catalyses alpha-D-glucose 1-phosphate + ATP + H(+) = ADP-alpha-D-glucose + diphosphate. The protein operates within glycan biosynthesis; glycogen biosynthesis. Functionally, involved in the biosynthesis of ADP-glucose, a building block required for the elongation reactions to produce glycogen. Catalyzes the reaction between ATP and alpha-D-glucose 1-phosphate (G1P) to produce pyrophosphate and ADP-Glc. This Yersinia pestis protein is Glucose-1-phosphate adenylyltransferase.